Reading from the N-terminus, the 316-residue chain is Probable cell division protein WhiA (316 aa).

The segment at residues threonine 275–alanine 309 is a DNA-binding region (H-T-H motif).

This sequence belongs to the WhiA family.

In terms of biological role, involved in cell division and chromosome segregation. The polypeptide is Probable cell division protein WhiA (Bacillus cytotoxicus (strain DSM 22905 / CIP 110041 / 391-98 / NVH 391-98)).